The following is a 295-amino-acid chain: Glutamate-binding protein GluB (295 aa).

The signal sequence occupies residues 1 to 26; that stretch reads MSAKRTFTRIGAILGATALAGVTLTA. Cys27 carries the N-palmitoyl cysteine lipid modification. A lipid anchor (S-diacylglycerol cysteine) is attached at Cys27.

The protein belongs to the bacterial solute-binding protein 3 family. In terms of assembly, the complex is composed of two ATP-binding proteins (GluA), two transmembrane proteins (GluC and GluD) and a solute-binding protein (GluB).

Its subcellular location is the cell membrane. With respect to regulation, binding of glutamate or asparatate induces a higher thermal stability of the protein structure. Functionally, part of the ABC transporter complex GluABCD involved in glutamate uptake. Binds glutamate with a high affinity. Also binds aspartate with high affinity, suggesting that GluB could be involved in the transport of both amino acid residues into the cell. The chain is Glutamate-binding protein GluB from Corynebacterium glutamicum (strain ATCC 13032 / DSM 20300 / JCM 1318 / BCRC 11384 / CCUG 27702 / LMG 3730 / NBRC 12168 / NCIMB 10025 / NRRL B-2784 / 534).